The following is a 62-amino-acid chain: Large ribosomal subunit protein bL33 (62 aa).

This sequence belongs to the bacterial ribosomal protein bL33 family.

The protein is Large ribosomal subunit protein bL33 of Parabacteroides distasonis (strain ATCC 8503 / DSM 20701 / CIP 104284 / JCM 5825 / NCTC 11152).